The primary structure comprises 225 residues: Type II restriction enzyme BslI subunit alpha (225 aa).

2 consecutive C4-type zinc fingers follow at residues 36 to 53 and 63 to 84; these read CKDCGQYWHTSLSECYFC and CNSCGKKYSLTSSSKSCDTDGC.

Heterotetramer of two alpha and two beta subunits. The alpha subunit is believed to be responsible for DNA recognition, while the beta subunit is thought to mediate cleavage. It depends on Zn(2+) as a cofactor.

It catalyses the reaction Endonucleolytic cleavage of DNA to give specific double-stranded fragments with terminal 5'-phosphates.. In terms of biological role, a P subtype restriction enzyme that recognizes the double-stranded sequence 5'-CCN(7)GG-3' and cleaves after N-7. The polypeptide is Type II restriction enzyme BslI subunit alpha (Bacillus sp. (strain NEB-606)).